The following is a 218-amino-acid chain: UPF0502 protein Geob_1184 (218 aa).

The protein belongs to the UPF0502 family.

This is UPF0502 protein Geob_1184 from Geotalea daltonii (strain DSM 22248 / JCM 15807 / FRC-32) (Geobacter daltonii).